The following is a 432-amino-acid chain: Aspartate aminotransferase (432 aa).

45–46 (RG) contacts substrate. Residue 109–111 (SSL) participates in pyridoxal 5'-phosphate binding. Residue 148-150 (YDR) coordinates substrate. Pyridoxal 5'-phosphate is bound by residues Asn-197, Tyr-229, and 262-265 (STSK). Residue Arg-400 participates in substrate binding.

Belongs to the class-I pyridoxal-phosphate-dependent aminotransferase family. In terms of assembly, homodimer. It depends on pyridoxal 5'-phosphate as a cofactor.

The catalysed reaction is L-aspartate + 2-oxoglutarate = oxaloacetate + L-glutamate. This is Aspartate aminotransferase from Corynebacterium glutamicum (strain ATCC 13032 / DSM 20300 / JCM 1318 / BCRC 11384 / CCUG 27702 / LMG 3730 / NBRC 12168 / NCIMB 10025 / NRRL B-2784 / 534).